The sequence spans 206 residues: Large ribosomal subunit protein uL4 (206 aa).

Residues 63–97 (MYKQKGTGRARHHSARAPQFRGGGKAHGPVVRSHE) form a disordered region. Residues 64–77 (YKQKGTGRARHHSA) show a composition bias toward basic residues.

The protein belongs to the universal ribosomal protein uL4 family. Part of the 50S ribosomal subunit.

Functionally, one of the primary rRNA binding proteins, this protein initially binds near the 5'-end of the 23S rRNA. It is important during the early stages of 50S assembly. It makes multiple contacts with different domains of the 23S rRNA in the assembled 50S subunit and ribosome. Its function is as follows. Forms part of the polypeptide exit tunnel. This is Large ribosomal subunit protein uL4 from Rhizobium etli (strain CIAT 652).